The primary structure comprises 38 residues: Large ribosomal subunit protein bL36 (38 aa).

Belongs to the bacterial ribosomal protein bL36 family.

The sequence is that of Large ribosomal subunit protein bL36 from Pelodictyon phaeoclathratiforme (strain DSM 5477 / BU-1).